The following is a 792-amino-acid chain: Endonuclease MutS2 (792 aa).

344–351 (GPNTGGKT) is a binding site for ATP. One can recognise a Smr domain in the interval 716–791 (IHLRGLHVEE…GLGVTVVYLE (76 aa)).

This sequence belongs to the DNA mismatch repair MutS family. MutS2 subfamily. In terms of assembly, homodimer. Binds to stalled ribosomes, contacting rRNA.

Its function is as follows. Endonuclease that is involved in the suppression of homologous recombination and thus may have a key role in the control of bacterial genetic diversity. Acts as a ribosome collision sensor, splitting the ribosome into its 2 subunits. Detects stalled/collided 70S ribosomes which it binds and splits by an ATP-hydrolysis driven conformational change. Acts upstream of the ribosome quality control system (RQC), a ribosome-associated complex that mediates the extraction of incompletely synthesized nascent chains from stalled ribosomes and their subsequent degradation. Probably generates substrates for RQC. The polypeptide is Endonuclease MutS2 (Thermomicrobium roseum (strain ATCC 27502 / DSM 5159 / P-2)).